The following is a 367-amino-acid chain: DNA replication and repair protein RecF (367 aa).

30-37 (GANGSGKT) is an ATP binding site.

This sequence belongs to the RecF family.

The protein resides in the cytoplasm. Functionally, the RecF protein is involved in DNA metabolism; it is required for DNA replication and normal SOS inducibility. RecF binds preferentially to single-stranded, linear DNA. It also seems to bind ATP. This Pseudomonas fluorescens (strain ATCC BAA-477 / NRRL B-23932 / Pf-5) protein is DNA replication and repair protein RecF.